Here is a 221-residue protein sequence, read N- to C-terminus: N-(5'-phosphoribosyl)anthranilate isomerase (221 aa).

Belongs to the TrpF family.

The catalysed reaction is N-(5-phospho-beta-D-ribosyl)anthranilate = 1-(2-carboxyphenylamino)-1-deoxy-D-ribulose 5-phosphate. It functions in the pathway amino-acid biosynthesis; L-tryptophan biosynthesis; L-tryptophan from chorismate: step 3/5. This Geobacillus thermodenitrificans (strain NG80-2) protein is N-(5'-phosphoribosyl)anthranilate isomerase.